The sequence spans 914 residues: Serine/threonine-protein kinase MST20 (914 aa).

Positions Met1 to Asp12 are enriched in polar residues. 3 disordered regions span residues Met1–Asn140, Asn156–Asn184, and Ala251–Lys286. 3 stretches are compositionally biased toward low complexity: residues Thr13–Ser26, Arg63–Pro72, and Thr79–Ser97. Positions Ala122–His136 are enriched in basic and acidic residues. The segment covering Asn156–Ser166 has biased composition (basic residues). Residues Pro175–Asn184 are compositionally biased toward polar residues. Residues Arg271–Lys280 show a composition bias toward basic and acidic residues. The region spanning Ile306–Gly319 is the CRIB domain. The segment at Ser408–Leu615 is disordered. Composition is skewed to low complexity over residues Ala516 to Ala548 and Gln562 to Gln576. Polar residues predominate over residues Tyr577–Ala586. Residues Gln587–Gln596 show a composition bias toward low complexity. The Protein kinase domain maps to Tyr634–Met885. ATP is bound by residues Ile640 to Val648 and Lys663. Asp753 (proton acceptor) is an active-site residue.

It belongs to the protein kinase superfamily. STE Ser/Thr protein kinase family. STE20 subfamily.

It is found in the cytoplasm. Its subcellular location is the nucleus. It catalyses the reaction L-seryl-[protein] + ATP = O-phospho-L-seryl-[protein] + ADP + H(+). The enzyme catalyses L-threonyl-[protein] + ATP = O-phospho-L-threonyl-[protein] + ADP + H(+). Its function is as follows. MAP4K component of the MAPK pathway required for the mating pheromone response and the regulation of cell polarity and cell cycle. Phosphorylates histone H2B to form H2BS10ph. Is involved in conidiation, aerial hyphal growth and infection-related morphogenesis. The polypeptide is Serine/threonine-protein kinase MST20 (MST20) (Pyricularia oryzae (strain 70-15 / ATCC MYA-4617 / FGSC 8958) (Rice blast fungus)).